The following is a 428-amino-acid chain: Histidinol dehydrogenase (428 aa).

NAD(+) is bound by residues Tyr124, Gln186, and Asn209. Positions 233, 255, and 258 each coordinate substrate. Residues Gln255 and His258 each contribute to the Zn(2+) site. Catalysis depends on proton acceptor residues Glu322 and His323. Residues His323, Asp356, Glu410, and His415 each coordinate substrate. Asp356 serves as a coordination point for Zn(2+). His415 lines the Zn(2+) pocket.

It belongs to the histidinol dehydrogenase family. It depends on Zn(2+) as a cofactor.

The catalysed reaction is L-histidinol + 2 NAD(+) + H2O = L-histidine + 2 NADH + 3 H(+). It functions in the pathway amino-acid biosynthesis; L-histidine biosynthesis; L-histidine from 5-phospho-alpha-D-ribose 1-diphosphate: step 9/9. Functionally, catalyzes the sequential NAD-dependent oxidations of L-histidinol to L-histidinaldehyde and then to L-histidine. This Bacteroides fragilis (strain YCH46) protein is Histidinol dehydrogenase.